The sequence spans 1485 residues: Putative E3 ubiquitin-protein ligase LIN-2 (1485 aa).

The segment covering 337 to 353 (EENEDDSDSELDNESVD) has biased composition (acidic residues). Disordered stretches follow at residues 337 to 363 (EENE…IFSP), 384 to 450 (NQIP…ISNA), and 462 to 507 (RKND…KLSM). Residues 438–450 (SSPDISIDNISNA) show a composition bias toward low complexity. Positions 466-484 (SQTPSMNQDNENSLVLNDS) are enriched in polar residues. The 76-residue stretch at 510–585 (KPPKDFVCPI…TSWKEQNPEL (76 aa)) folds into the U-box domain. 4 WD repeats span residues 1194 to 1232 (SCKE…KVCD), 1246 to 1283 (EHTK…IKCI), 1409 to 1448 (SLST…RVAS), and 1454 to 1485 (GHTK…WALD).

The enzyme catalyses S-ubiquitinyl-[E2 ubiquitin-conjugating enzyme]-L-cysteine + [acceptor protein]-L-lysine = [E2 ubiquitin-conjugating enzyme]-L-cysteine + N(6)-ubiquitinyl-[acceptor protein]-L-lysine.. It participates in protein modification; protein ubiquitination. Functionally, putative E3 ubiquitin-protein ligase involved in the rhizobial infection process. Plays an important role in the early steps of infection thread formation and in growth and differentiation of nodules. The sequence is that of Putative E3 ubiquitin-protein ligase LIN-2 from Lotus japonicus (Lotus corniculatus var. japonicus).